The chain runs to 209 residues: Guanylate kinase (209 aa).

One can recognise a Guanylate kinase-like domain in the interval 16–198; sequence GRLVIISGPS…AVTEICQILL (183 aa). Position 23–30 (23–30) interacts with ATP; the sequence is GPSGAGKS.

It belongs to the guanylate kinase family.

The protein resides in the cytoplasm. It catalyses the reaction GMP + ATP = GDP + ADP. Its function is as follows. Essential for recycling GMP and indirectly, cGMP. This is Guanylate kinase from Rhodopirellula baltica (strain DSM 10527 / NCIMB 13988 / SH1).